The sequence spans 214 residues: Outer-membrane lipoprotein LolB (214 aa).

An N-terminal signal peptide occupies residues 1 to 25 (MNNLKRFTKSIFSCIALSGLLFLGG). A lipid anchor (N-palmitoyl cysteine) is attached at cysteine 26. Cysteine 26 is lipidated: S-diacylglycerol cysteine.

The protein belongs to the LolB family. In terms of assembly, monomer.

It is found in the cell outer membrane. In terms of biological role, plays a critical role in the incorporation of lipoproteins in the outer membrane after they are released by the LolA protein. The polypeptide is Outer-membrane lipoprotein LolB (Shewanella sp. (strain MR-4)).